The following is a 178-amino-acid chain: Lipid A deacylase PagL (178 aa).

The signal sequence occupies residues 1 to 19; sequence MQFLKKNKPLFGIVTLALA. Residues His154, Ser156, and Asp168 each act as charge relay system in the active site.

This sequence belongs to the PagL family. Homodimer.

It localises to the cell outer membrane. The enzyme catalyses a 3-(acyloxy)acyl derivative of bacterial toxin + H2O = a 3-hydroxyacyl derivative of bacterial toxin + a fatty acid + H(+). Has lipid A 3-O-deacylase activity. Hydrolyzes the ester bond at the 3 position of lipid A, a bioactive component of lipopolysaccharide (LPS), thereby releasing the primary fatty acyl moiety. The polypeptide is Lipid A deacylase PagL (Bordetella bronchiseptica (strain ATCC BAA-588 / NCTC 13252 / RB50) (Alcaligenes bronchisepticus)).